Consider the following 267-residue polypeptide: Phosphate import ATP-binding protein PstB 2 (267 aa).

An ABC transporter domain is found at 21–262 (LATKDLHVYY…AQCQSTNDYV (242 aa)). 53–60 (GPSGCGKS) lines the ATP pocket.

Belongs to the ABC transporter superfamily. Phosphate importer (TC 3.A.1.7) family. As to quaternary structure, the complex is composed of two ATP-binding proteins (PstB), two transmembrane proteins (PstC and PstA) and a solute-binding protein (PstS).

It is found in the cell membrane. It carries out the reaction phosphate(out) + ATP + H2O = ADP + 2 phosphate(in) + H(+). Part of the ABC transporter complex PstSACB involved in phosphate import. Responsible for energy coupling to the transport system. The chain is Phosphate import ATP-binding protein PstB 2 from Streptococcus pyogenes serotype M1.